The sequence spans 399 residues: Acetate kinase (399 aa).

Asn-10 provides a ligand contact to Mg(2+). ATP is bound at residue Lys-17. Arg-91 contributes to the substrate binding site. The Proton donor/acceptor role is filled by Asp-148. ATP contacts are provided by residues 208 to 212, 283 to 285, and 331 to 335; these read HLGNG, DCR, and GIGEN. Position 385 (Glu-385) interacts with Mg(2+).

The protein belongs to the acetokinase family. In terms of assembly, homodimer. It depends on Mg(2+) as a cofactor. Requires Mn(2+) as cofactor.

It localises to the cytoplasm. The enzyme catalyses acetate + ATP = acetyl phosphate + ADP. It participates in metabolic intermediate biosynthesis; acetyl-CoA biosynthesis; acetyl-CoA from acetate: step 1/2. Its function is as follows. Catalyzes the formation of acetyl phosphate from acetate and ATP. Can also catalyze the reverse reaction. In Shewanella baltica (strain OS223), this protein is Acetate kinase.